A 2333-amino-acid polypeptide reads, in one-letter code: Genome polyprotein (2333 aa).

One can recognise a Peptidase C28 domain in the interval 1 to 201 (MNTTNCFIAL…WKANVQRKLK (201 aa)). The Cytoplasmic portion of the chain corresponds to 1–1481 (MNTTNCFIAL…SFVKRAFKRL (1481 aa)). Catalysis depends on for leader protease activity residues C51, H148, and D163. Disordered stretches follow at residues 199 to 218 (KLKGAGQSSPATGSQNQSGN) and 238 to 265 (QLGDNAISGGSNEGSTDTTSTHTTNTQN). G202 carries the N-myristoyl glycine; by host lipid modification. Polar residues-rich tracts occupy residues 204–218 (GQSSPATGSQNQSGN) and 238–251 (QLGDNAISGGSNEG). Over residues 252 to 265 (STDTTSTHTTNTQN) the composition is skewed to low complexity. An antigenic epitope region spans residues 789 to 797 (ALLRAATYY). Residues 869 to 871 (RGD) carry the Cell attachment site motif. In terms of domain architecture, SF3 helicase spans 1190–1354 (NVHIANLCKV…DGYKINNKLD (165 aa)). Residue 1218–1225 (GKSGQGKS) coordinates ATP. An intramembrane segment occupies 1482 to 1502 (KENFEIVALCLTLLANIVIMI). Residues 1503 to 2333 (RETRKRQKMV…RWVNAVCGDA (831 aa)) lie on the Cytoplasmic side of the membrane. The segment at 1562 to 1589 (NDVNSEPARPAEEQPQAEGPYTGPLERQ) is disordered. O-(5'-phospho-RNA)-tyrosine occurs at positions 1582, 1605, and 1629. A Peptidase C3 domain is found at 1653–1849 (APPTDLQKMV…YCSCVSRSML (197 aa)). H1696 functions as the For protease 3C activity; Proton donor/acceptor in the catalytic mechanism. Catalysis depends on for protease 3C activity residues D1734 and C1813. The Nuclear localization signal signature appears at 1879-1887 (MRKTKLAPT). A RdRp catalytic domain is found at 2097-2215 (RNVWDVDYSA…ASDYDLDFEA (119 aa)). G2200 (for RdRp activity) is an active-site residue.

The protein belongs to the picornaviruses polyprotein family. In terms of assembly, interacts with host ISG15. As to quaternary structure, interacts (via R-G-D motif) with host ITGAV/ITGB6. Interacts with host MAVS; this interaction inhibits binding of host TRAF3 to MAVS, thereby suppressing interferon-mediated responses. Forms homooligomers. In terms of assembly, homohexamer. Interacts with host VIM. Interacts with host BECN1. As to quaternary structure, interacts with host DCTN3. Interacts with RNA-dependent RNA polymerase; this interaction allows 3B-1 to binds 2 polymerases and act as a primer. It also allows the recruitment of the RNA-dependent RNA polymerase to host membranes. In terms of assembly, interacts with RNA-dependent RNA polymerase; this interaction allows 3B-2 to act as a primer. As to quaternary structure, interacts with RNA-dependent RNA polymerase; this interaction allows 3B-3 to act as a primer. Interacts with 3B-1; this interaction allows 3B-1 to binds 2 polymerases and act as a primer. It also allows the recruitment of the RNA-dependent RNA polymerase to host membranes. Interacts with 3B-2; this interaction allows 3B-2 to act as a primer. Interacts with 3B-3; this interaction allows 3B-3 to act as a primer. Removes six residues from its own C-terminus, generating sLb(pro). Post-translationally, specific enzymatic cleavages in vivo by the viral proteases yield a variety of precursors and mature proteins. The polyprotein seems to be cotranslationally cleaved at the 2A/2B junction by a ribosomal skip from one codon to the next without formation of a peptide bond. This process would release the L-P1-2A peptide from the translational complex. In terms of processing, during virion maturation, immature virions are rendered infectious following cleavage of VP0 into VP4 and VP2. This maturation seems to be an autocatalytic event triggered by the presence of RNA in the capsid and is followed by a conformational change of the particle. Myristoylation is required during RNA encapsidation and formation of the mature virus particle. Post-translationally, uridylylated by the polymerase and covalently linked to the 5'-end of genomic RNA. These uridylylated forms act as a nucleotide-peptide primer for the polymerase.

The protein localises to the host nucleus. The protein resides in the host cytoplasm. It is found in the virion. It localises to the host endoplasmic reticulum membrane. Its subcellular location is the host cytoplasmic vesicle membrane. It catalyses the reaction Autocatalytically cleaves itself from the polyprotein of the foot-and-mouth disease virus by hydrolysis of a Lys-|-Gly bond, but then cleaves host cell initiation factor eIF-4G at bonds -Gly-|-Arg- and -Lys-|-Arg-.. The catalysed reaction is a ribonucleoside 5'-triphosphate + H2O = a ribonucleoside 5'-diphosphate + phosphate + H(+). It carries out the reaction RNA(n) + a ribonucleoside 5'-triphosphate = RNA(n+1) + diphosphate. The enzyme catalyses Selective cleavage of Gln-|-Gly bond in the poliovirus polyprotein. In other picornavirus reactions Glu may be substituted for Gln, and Ser or Thr for Gly.. Functionally, autocatalytically cleaves itself from the polyprotein at the L/VP0 junction. Also cleaves the host translation initiation factors EIF4G1 and EIF4G3, in order to shut off the capped cellular mRNA transcription. Plays a role in counteracting host innate antiviral response using diverse mechanisms. Possesses a deubiquitinase activity acting on both 'Lys-48' and 'Lys-63'-linked polyubiquitin chains. In turn, inhibits the ubiquitination and subsequent activation of key signaling molecules of type I IFN response such as host RIGI, TBK1, TRAF3 and TRAF6. Inhibits host NF-kappa-B activity by inducing a decrease in RELA mRNA levels. Cleaves a peptide bond in the C-terminus of host ISG15, resulting in the damaging of this modifier that can no longer be attached to target proteins. Also cleaves host G3BP1 and G3BP2 in order to inhibit cytoplasmic stress granules assembly. In terms of biological role, lies on the inner surface of the capsid shell. After binding to the host receptor, the capsid undergoes conformational changes. Capsid protein VP4 is released, capsid protein VP1 N-terminus is externalized, and together, they shape a pore in the host membrane through which the viral genome is translocated into the host cell cytoplasm. After genome has been released, the channel shrinks. Its function is as follows. Forms an icosahedral capsid of pseudo T=3 symmetry with capsid proteins VP1 and VP3. The capsid is composed of 60 copies of each capsid protein organized in the form of twelve pentamers and encloses the viral positive strand RNA genome. Upon acidifcation in the endosome, dissociates into pentamers. Forms an icosahedral capsid of pseudo T=3 symmetry with capsid proteins VP0 and VP3. The capsid is composed of 60 copies of each capsid protein organized in the form of twelve pentamers and encloses the viral positive strand RNA genome. Upon acidifcation in the endosome, dissociates into pentamers. Functionally, forms an icosahedral capsid of pseudo T=3 symmetry with capsid proteins VP2 and VP3. The capsid is composed of 60 copies of each capsid protein organized in the form of twelve pentamers and encloses the viral positive strand RNA genome. Mediates cell entry by attachment to an integrin receptor, usually host ITGAV/ITGB6. In addition, targets host MAVS to suppress type I IFN pathway. Upon acidifcation in the endosome, dissociates into pentamers. In terms of biological role, mediates self-processing of the polyprotein by a translational effect termed 'ribosome skipping'. Mechanistically, 2A-mediated cleavage occurs between the C-terminal glycine and the proline of the downstream protein 2B. In the case of foot-and-mouth disease virus, the 2A oligopeptide is post-translationally 'trimmed' from the C-terminus of the upstream protein 1D by 3C proteinase. Its function is as follows. Plays an essential role in the virus replication cycle by acting as a viroporin. Creates a pore in the host endoplasmic reticulum and as a consequence releases Ca2+ in the cytoplasm of infected cell. In turn, high levels of cytoplasmic calcium may trigger membrane trafficking and transport of viral ER-associated proteins to viroplasms, sites of viral genome replication. Associates with and induces structural rearrangements of intracellular membranes. Triggers host autophagy by interacting with host BECN1 and thereby promotes viral replication. Participates in viral replication and interacts with host DHX9. Displays RNA-binding, nucleotide binding and NTPase activities. May play a role in virion morphogenesis and viral RNA encapsidation by interacting with the capsid protein VP3. Functionally, plays important roles in virus replication, virulence and host range. In terms of biological role, covalently linked to the 5'-end of both the positive-strand and negative-strand genomic RNAs. Acts as a genome-linked replication primer. Its function is as follows. Cysteine protease that generates mature viral proteins from the precursor polyprotein. In addition to its proteolytic activity, binds to viral RNA and thus influences viral genome replication. RNA and substrate bind cooperatively to the protease. RNA-directed RNA polymerase 3D-POL replicates genomic and antigenomic RNA by recognizing replications specific signals. Covalently attaches UMP to a tyrosine of VPg, which is used to prime RNA synthesis. The positive stranded RNA genome is first replicated at virus induced membranous vesicles, creating a dsRNA genomic replication form. This dsRNA is then used as template to synthesize positive stranded RNA genomes. ss(+)RNA genomes are either translated, replicated or encapsidated. This is Genome polyprotein from Foot-and-mouth disease virus (isolate Bovine/United Kingdom/A12Valle119/1932 serotype A) (FMDV).